We begin with the raw amino-acid sequence, 353 residues long: UPF0283 membrane protein YcjF (353 aa).

The interval 16 to 35 (KEESTSAFKAQQTFSEAESR) is disordered. Polar residues predominate over residues 20–31 (TSAFKAQQTFSE). The next 3 membrane-spanning stretches (helical) occupy residues 70 to 90 (MVMGGLALFGASVVGQGVQWT), 100 to 120 (VALGGCAAGALIIGAGVGSVV), and 213 to 233 (ESTLMIAVSPLALVDMAFIAW).

The protein belongs to the UPF0283 family.

It is found in the cell inner membrane. This chain is UPF0283 membrane protein YcjF, found in Salmonella heidelberg (strain SL476).